Here is a 947-residue protein sequence, read N- to C-terminus: Protein translocase subunit SecA (947 aa).

Residues Gln-87, Gly-105–Thr-109, and Asp-525 contribute to the ATP site. Positions Pro-905–Asn-928 are disordered. Positions 931, 933, 942, and 943 each coordinate Zn(2+).

Belongs to the SecA family. In terms of assembly, monomer and homodimer. Part of the essential Sec protein translocation apparatus which comprises SecA, SecYEG and auxiliary proteins SecDF-YajC and YidC. It depends on Zn(2+) as a cofactor.

Its subcellular location is the cell inner membrane. The protein resides in the cytoplasm. The enzyme catalyses ATP + H2O + cellular proteinSide 1 = ADP + phosphate + cellular proteinSide 2.. Functionally, part of the Sec protein translocase complex. Interacts with the SecYEG preprotein conducting channel. Has a central role in coupling the hydrolysis of ATP to the transfer of proteins into and across the cell membrane, serving both as a receptor for the preprotein-SecB complex and as an ATP-driven molecular motor driving the stepwise translocation of polypeptide chains across the membrane. This chain is Protein translocase subunit SecA, found in Rhodopseudomonas palustris (strain BisB18).